Here is a 236-residue protein sequence, read N- to C-terminus: 2-C-methyl-D-erythritol 4-phosphate cytidylyltransferase (236 aa).

The protein belongs to the IspD/TarI cytidylyltransferase family. IspD subfamily. In terms of assembly, homodimer.

The catalysed reaction is 2-C-methyl-D-erythritol 4-phosphate + CTP + H(+) = 4-CDP-2-C-methyl-D-erythritol + diphosphate. The protein operates within isoprenoid biosynthesis; isopentenyl diphosphate biosynthesis via DXP pathway; isopentenyl diphosphate from 1-deoxy-D-xylulose 5-phosphate: step 2/6. Functionally, catalyzes the formation of 4-diphosphocytidyl-2-C-methyl-D-erythritol from CTP and 2-C-methyl-D-erythritol 4-phosphate (MEP). This is 2-C-methyl-D-erythritol 4-phosphate cytidylyltransferase from Salmonella paratyphi B (strain ATCC BAA-1250 / SPB7).